Consider the following 990-residue polypeptide: Importin beta-like protein kap111 (990 aa).

This sequence belongs to the importin beta family.

It localises to the nucleus. In terms of biological role, functions as a component of the nuclear pore complex (NPC). NPC components, collectively referred to as nucleoporins (NUPs), can play the role of both NPC structural components and of docking or interaction partners for transiently associated nuclear transport factors. Active directional transport is assured by both, a Phe-Gly (FG) repeat affinity gradient for these transport factors across the NPC and a transport cofactor concentration gradient across the nuclear envelope. This Schizosaccharomyces pombe (strain 972 / ATCC 24843) (Fission yeast) protein is Importin beta-like protein kap111 (kap111).